Consider the following 282-residue polypeptide: MKKLLEGKTPANEITENLKKEIKNLKNDGINPTLCVIEVGDDPASKIYLRVKRNLAKKVGINEVGLHFPADTSQAELLGKIKELNQDPNINGIMVQLPVPPQIDPRAIFETIAPEKDADGFSPLNLGRLWEGQSDIIPATVRSILTLIDYYGIKMAGKNTVIIGRSVIVGKPLAAVLLERDATVTIAHSKTKNLADLTRNADVIISDVGKAHLVTEDMVKDGAVLIDVGMNRENGKLMGDVDFDTVAPKANAITPVPGGVGPLTVASLMKQAVILTRKQHGR.

NADP(+) contacts are provided by residues 164 to 166 (GRS) and Ser-189.

It belongs to the tetrahydrofolate dehydrogenase/cyclohydrolase family. Homodimer.

It carries out the reaction (6R)-5,10-methylene-5,6,7,8-tetrahydrofolate + NADP(+) = (6R)-5,10-methenyltetrahydrofolate + NADPH. The catalysed reaction is (6R)-5,10-methenyltetrahydrofolate + H2O = (6R)-10-formyltetrahydrofolate + H(+). It functions in the pathway one-carbon metabolism; tetrahydrofolate interconversion. Functionally, catalyzes the oxidation of 5,10-methylenetetrahydrofolate to 5,10-methenyltetrahydrofolate and then the hydrolysis of 5,10-methenyltetrahydrofolate to 10-formyltetrahydrofolate. This chain is Bifunctional protein FolD, found in Lactobacillus gasseri (strain ATCC 33323 / DSM 20243 / BCRC 14619 / CIP 102991 / JCM 1131 / KCTC 3163 / NCIMB 11718 / NCTC 13722 / AM63).